The chain runs to 51 residues: Large ribosomal subunit protein bL33 (51 aa).

The protein belongs to the bacterial ribosomal protein bL33 family.

The polypeptide is Large ribosomal subunit protein bL33 (Idiomarina loihiensis (strain ATCC BAA-735 / DSM 15497 / L2-TR)).